The following is a 112-amino-acid chain: Large ribosomal subunit protein uL22 (112 aa).

This sequence belongs to the universal ribosomal protein uL22 family. In terms of assembly, part of the 50S ribosomal subunit.

In terms of biological role, this protein binds specifically to 23S rRNA; its binding is stimulated by other ribosomal proteins, e.g. L4, L17, and L20. It is important during the early stages of 50S assembly. It makes multiple contacts with different domains of the 23S rRNA in the assembled 50S subunit and ribosome. Functionally, the globular domain of the protein is located near the polypeptide exit tunnel on the outside of the subunit, while an extended beta-hairpin is found that lines the wall of the exit tunnel in the center of the 70S ribosome. This Anaplasma marginale (strain Florida) protein is Large ribosomal subunit protein uL22.